The following is a 419-amino-acid chain: Protein distal antenna-related (419 aa).

One can recognise an HTH psq-type domain in the interval 15 to 66 (TRGKRPLRNLTPNDKVRAIQRIHNGETKASVSRDIGVPESTLRGWCKNEQKL). Positions 42–62 (KASVSRDIGVPESTLRGWCKN) form a DNA-binding region, H-T-H motif. Disordered regions lie at residues 333–359 (QPGG…PDLE) and 378–419 (EASN…DAEQ).

In terms of assembly, interacts with itself, dan, ey and dac to form a complex (or complexes) containing the RD factors. As to expression, coexpressed with dan in the presumptive distal antenna, but not in the leg imaginal disk. Both proteins are also expressed in the brain and the eye region of the eye-antenna disk. First detected in early L3 eye disks in cells surrounding the newly initiated morphogenetic furrow. Highly expressed in evenly spaced clusters of cells anterior to the furrow, lower levels within and posterior to the furrow.

The protein resides in the nucleus. Its function is as follows. Probable transcription factor with a role in the retinal determination (RD) network. Regulates ato expression and is required for normal R8 induction and differentiation. Danr appears to repress Dan expression, but Dan is required for Danr expression anterior to the morphogenetic furrow (MF). Dan and Danr lie downstream of so and require dac function for highest levels of expression. Contributes to differentiation of antenna-specific characteristics; effector gene that acts downstream of homothorax (hth), Distal-less (Dll), cut (ct) and spineless (ss) genes to control differentiation of distal antennal structures. This chain is Protein distal antenna-related, found in Drosophila melanogaster (Fruit fly).